The sequence spans 63 residues: Large ribosomal subunit protein bL28 (63 aa).

This sequence belongs to the bacterial ribosomal protein bL28 family.

The polypeptide is Large ribosomal subunit protein bL28 (Clostridium kluyveri (strain NBRC 12016)).